The sequence spans 263 residues: UPF0739 protein C1orf74 homolog (263 aa).

This sequence belongs to the UPF0739 family.

In Mus musculus (Mouse), this protein is UPF0739 protein C1orf74 homolog.